Here is a 60-residue protein sequence, read N- to C-terminus: Large ribosomal subunit protein bL32 (60 aa).

The segment at 1-60 is disordered; that stretch reads MAVQQNKKSRSARDMRRSHDALEASTLSVEKSTGEVHLRHHVSPEGVYRGRKVIDKGADE. Basic and acidic residues predominate over residues 11–22; it reads SARDMRRSHDAL.

This sequence belongs to the bacterial ribosomal protein bL32 family.

This Ectopseudomonas mendocina (strain ymp) (Pseudomonas mendocina) protein is Large ribosomal subunit protein bL32.